The sequence spans 210 residues: Protein MSO1 (210 aa).

Met-1 carries the N-acetylmethionine modification. N-acetylserine is present on Met-2. Positions 88 to 210 are disordered; sequence KHDMKKQNSR…LKRRNNDYGF (123 aa). The residue at position 102 (Ser-102) is a Phosphoserine. A compositionally biased stretch (polar residues) spans 117–141; sequence TPSSNGNTPEYTPASKSFQDIYNNH. 2 stretches are compositionally biased toward low complexity: residues 142–161 and 172–183; these read TSSSSATPRRASSRPTRPSA and SKTSNSFNTSST.

In terms of assembly, interacts physically with SEC1.

Involved in secretion. Component of the secretory vesicle docking complex. The chain is Protein MSO1 (MSO1) from Saccharomyces cerevisiae (strain ATCC 204508 / S288c) (Baker's yeast).